The primary structure comprises 759 residues: Protein YdeP (759 aa).

[4Fe-4S] cluster contacts are provided by C49 and C52.

Belongs to the prokaryotic molybdopterin-containing oxidoreductase family. [4Fe-4S] cluster serves as cofactor. Requires Mo-bis(molybdopterin guanine dinucleotide) as cofactor.

In terms of biological role, probably involved in acid resistance. The polypeptide is Protein YdeP (ydeP) (Escherichia coli (strain K12)).